We begin with the raw amino-acid sequence, 536 residues long: Phosphoenolpyruvate carboxykinase (ATP) (536 aa).

Positions 62, 203, and 209 each coordinate substrate. ATP-binding positions include lysine 209, histidine 228, and 244–252 (GLSGTGKTT). Mn(2+) is bound by residues lysine 209 and histidine 228. Position 265 (aspartate 265) interacts with Mn(2+). ATP contacts are provided by residues glutamate 293, arginine 329, 445 to 446 (RI), and threonine 451. Substrate is bound at residue arginine 329.

This sequence belongs to the phosphoenolpyruvate carboxykinase (ATP) family. As to quaternary structure, monomer. Requires Mn(2+) as cofactor.

Its subcellular location is the cytoplasm. It catalyses the reaction oxaloacetate + ATP = phosphoenolpyruvate + ADP + CO2. It participates in carbohydrate biosynthesis; gluconeogenesis. In terms of biological role, involved in the gluconeogenesis. Catalyzes the conversion of oxaloacetate (OAA) to phosphoenolpyruvate (PEP) through direct phosphoryl transfer between the nucleoside triphosphate and OAA. This chain is Phosphoenolpyruvate carboxykinase (ATP), found in Actinobacillus pleuropneumoniae serotype 7 (strain AP76).